Here is a 378-residue protein sequence, read N- to C-terminus: Putative F-box/kelch-repeat protein At3g43710 (378 aa).

The F-box domain maps to 23-69 (TFGIEMLPDDLVLSCLARVPRMYYPILSLVSKRFRSFLTSTELYQTR). Kelch repeat units lie at residues 130-176 (NIYV…VLDG), 178-227 (IYVA…GYDG), and 262-308 (SQCV…VPTK).

The protein is Putative F-box/kelch-repeat protein At3g43710 of Arabidopsis thaliana (Mouse-ear cress).